A 100-amino-acid chain; its full sequence is Glutamyl-tRNA(Gln) amidotransferase subunit C (100 aa).

This sequence belongs to the GatC family. Heterotrimer of A, B and C subunits.

The catalysed reaction is L-glutamyl-tRNA(Gln) + L-glutamine + ATP + H2O = L-glutaminyl-tRNA(Gln) + L-glutamate + ADP + phosphate + H(+). It catalyses the reaction L-aspartyl-tRNA(Asn) + L-glutamine + ATP + H2O = L-asparaginyl-tRNA(Asn) + L-glutamate + ADP + phosphate + 2 H(+). Functionally, allows the formation of correctly charged Asn-tRNA(Asn) or Gln-tRNA(Gln) through the transamidation of misacylated Asp-tRNA(Asn) or Glu-tRNA(Gln) in organisms which lack either or both of asparaginyl-tRNA or glutaminyl-tRNA synthetases. The reaction takes place in the presence of glutamine and ATP through an activated phospho-Asp-tRNA(Asn) or phospho-Glu-tRNA(Gln). The sequence is that of Glutamyl-tRNA(Gln) amidotransferase subunit C from Rickettsia conorii (strain ATCC VR-613 / Malish 7).